The following is a 756-amino-acid chain: Deoxynucleotidyltransferase terminal-interacting protein 2 (756 aa).

Positions 1 to 99 (MVVTRSARAK…AESNYSVSEH (99 aa)) are disordered. The span at 9-21 (AKASIQAASAESS) shows a compositional bias: low complexity. Ser-21 carries the phosphoserine modification. 2 stretches are compositionally biased toward polar residues: residues 35-55 (PESS…TGKQ) and 80-96 (EPST…NYSV). Ser-117 carries the post-translational modification Phosphoserine. Thr-129 carries the post-translational modification Phosphothreonine. A phosphoserine mark is found at Ser-141, Ser-145, Ser-148, Ser-184, and Ser-194. Residues 156–261 (PTEKTTGARR…LSEINKPNFY (106 aa)) are disordered. Positions 201-211 (RRTRSMQRKLK) are enriched in basic residues. Glycyl lysine isopeptide (Lys-Gly) (interchain with G-Cter in SUMO2) cross-links involve residues Lys-217 and Lys-220. Thr-232 carries the phosphothreonine modification. 3 positions are modified to phosphoserine: Ser-239, Ser-251, and Ser-253. Positions 242 to 256 (RQTSHLQARSLSEIN) are enriched in polar residues. Residues Lys-257, Lys-316, and Lys-321 each participate in a glycyl lysine isopeptide (Lys-Gly) (interchain with G-Cter in SUMO2) cross-link. Residues Ser-324 and Ser-330 each carry the phosphoserine modification. Lys-345 is covalently cross-linked (Glycyl lysine isopeptide (Lys-Gly) (interchain with G-Cter in SUMO2)). The residue at position 381 (Ser-381) is a Phosphoserine. Lys-384 is covalently cross-linked (Glycyl lysine isopeptide (Lys-Gly) (interchain with G-Cter in SUMO2)). Phosphoserine is present on residues Ser-434 and Ser-512. Residues 505-542 (LEEEDKASEVAIEEEKEEEEDEKSEEDSSDHDENEDEF) are a coiled coil. Positions 510–547 (KASEVAIEEEKEEEEDEKSEEDSSDHDENEDEFSDEED) are disordered. The tdBR region; mediates interaction with DNTT stretch occupies residues 548 to 605 (FLNSTKAKLLKLTSSSIDPGLSIKQLGGLYINFNADKLQSNKRTLTQIKEKKKNELLQ). Residue Lys-558 forms a Glycyl lysine isopeptide (Lys-Gly) (interchain with G-Cter in SUMO2) linkage. At Ser-569 the chain carries Phosphoserine. Glycyl lysine isopeptide (Lys-Gly) (interchain with G-Cter in SUMO2) cross-links involve residues Lys-584 and Lys-606. A Phosphothreonine modification is found at Thr-610. Residues Lys-626, Lys-649, Lys-658, Lys-686, and Lys-731 each participate in a glycyl lysine isopeptide (Lys-Gly) (interchain with G-Cter in SUMO2) cross-link.

As to quaternary structure, forms a ternary complex with DNTT and core histone; interaction with PCNA releases DNTT and H2A/H2B histones from this ternary complex. Interacts with ESR1, ESR2, PPARG and RXRA. Part of the small subunit (SSU) processome, composed of more than 70 proteins and the RNA chaperone small nucleolar RNA (snoRNA) U3. As to expression, widely expressed with higher levels in testis.

It is found in the nucleus. It localises to the nucleolus. In terms of biological role, regulates the transcriptional activity of DNTT and ESR1. May function as a chromatin remodeling protein. Part of the small subunit (SSU) processome, first precursor of the small eukaryotic ribosomal subunit. During the assembly of the SSU processome in the nucleolus, many ribosome biogenesis factors, an RNA chaperone and ribosomal proteins associate with the nascent pre-rRNA and work in concert to generate RNA folding, modifications, rearrangements and cleavage as well as targeted degradation of pre-ribosomal RNA by the RNA exosome. This is Deoxynucleotidyltransferase terminal-interacting protein 2 from Homo sapiens (Human).